The chain runs to 65 residues: Large ribosomal subunit protein bL35 (65 aa).

The protein belongs to the bacterial ribosomal protein bL35 family.

This is Large ribosomal subunit protein bL35 from Sodalis glossinidius (strain morsitans).